The primary structure comprises 195 residues: Probable WRKY transcription factor 56 (195 aa).

A compositionally biased stretch (polar residues) spans 1-10 (MEGVDNTNPM). Disordered stretches follow at residues 1–20 (MEGV…ENNN) and 70–93 (EMGG…KGKG). The WRKY DNA-binding region spans 108 to 173 (SDDDVLDDGY…YEGVHNHPCE (66 aa)).

This sequence belongs to the WRKY group II-c family.

The protein resides in the nucleus. Functionally, transcription factor. Interacts specifically with the W box (5'-(T)TGAC[CT]-3'), a frequently occurring elicitor-responsive cis-acting element. This Arabidopsis thaliana (Mouse-ear cress) protein is Probable WRKY transcription factor 56 (WRKY56).